Consider the following 403-residue polypeptide: Tyrosine--tRNA ligase (403 aa).

The 'HIGH' region signature appears at 42 to 51 (PTAPDLHLGH). The short motif at 226 to 230 (KMSKS) is the 'KMSKS' region element. Lys-229 lines the ATP pocket. In terms of domain architecture, S4 RNA-binding spans 339-400 (LRLAGLLTAA…GKRNFARVSL (62 aa)).

It belongs to the class-I aminoacyl-tRNA synthetase family. TyrS type 2 subfamily. As to quaternary structure, homodimer.

Its subcellular location is the cytoplasm. The catalysed reaction is tRNA(Tyr) + L-tyrosine + ATP = L-tyrosyl-tRNA(Tyr) + AMP + diphosphate + H(+). Its function is as follows. Catalyzes the attachment of tyrosine to tRNA(Tyr) in a two-step reaction: tyrosine is first activated by ATP to form Tyr-AMP and then transferred to the acceptor end of tRNA(Tyr). This is Tyrosine--tRNA ligase from Xanthomonas axonopodis pv. citri (strain 306).